The sequence spans 268 residues: Phosphatidylglycerol--prolipoprotein diacylglyceryl transferase (268 aa).

The next 4 helical transmembrane spans lie at 14–34 (LGPI…FAGW), 57–77 (LTFY…IIFY), 90–110 (FFLW…LIAF), and 117–137 (IGAN…IGLG). Arg-140 contacts a 1,2-diacyl-sn-glycero-3-phospho-(1'-sn-glycerol). 3 consecutive transmembrane segments (helical) span residues 174-194 (QLFE…LVTI), 200-220 (YLVL…CEFF), and 240-260 (ILSI…FIKI).

This sequence belongs to the Lgt family.

Its subcellular location is the cell inner membrane. The catalysed reaction is L-cysteinyl-[prolipoprotein] + a 1,2-diacyl-sn-glycero-3-phospho-(1'-sn-glycerol) = an S-1,2-diacyl-sn-glyceryl-L-cysteinyl-[prolipoprotein] + sn-glycerol 1-phosphate + H(+). It participates in protein modification; lipoprotein biosynthesis (diacylglyceryl transfer). Its function is as follows. Catalyzes the transfer of the diacylglyceryl group from phosphatidylglycerol to the sulfhydryl group of the N-terminal cysteine of a prolipoprotein, the first step in the formation of mature lipoproteins. In Francisella tularensis subsp. tularensis (strain FSC 198), this protein is Phosphatidylglycerol--prolipoprotein diacylglyceryl transferase.